The sequence spans 1379 residues: DNA-directed RNA polymerase subunit beta (1379 aa).

It belongs to the RNA polymerase beta chain family. As to quaternary structure, the RNAP catalytic core consists of 2 alpha, 1 beta, 1 beta' and 1 omega subunit. When a sigma factor is associated with the core the holoenzyme is formed, which can initiate transcription.

The enzyme catalyses RNA(n) + a ribonucleoside 5'-triphosphate = RNA(n+1) + diphosphate. DNA-dependent RNA polymerase catalyzes the transcription of DNA into RNA using the four ribonucleoside triphosphates as substrates. In Rhizobium etli (strain ATCC 51251 / DSM 11541 / JCM 21823 / NBRC 15573 / CFN 42), this protein is DNA-directed RNA polymerase subunit beta.